The chain runs to 69 residues: Putative membrane protein insertion efficiency factor (69 aa).

The protein belongs to the UPF0161 family.

The protein resides in the cell inner membrane. Its function is as follows. Could be involved in insertion of integral membrane proteins into the membrane. The sequence is that of Putative membrane protein insertion efficiency factor from Chromobacterium violaceum (strain ATCC 12472 / DSM 30191 / JCM 1249 / CCUG 213 / NBRC 12614 / NCIMB 9131 / NCTC 9757 / MK).